The chain runs to 452 residues: MSKITKVFAREILDSRGNPTIQVDVYTLAGGFGSAIVPSGASTGSREALELRDTNTKYADNWYGQKGVMTAVDNVNNIIAPEIIGLCCKNQRLIDQKMIELDGTPNKEKLGANAILGVSLAVAKAAANELRMPLFRYLGGTNPTLMPVPMLNVINGGEHASNTLDFQEFMIMPLGFRTFKEALQAANKVFHNLAKLLKKSGFETQVGDEGGFAPNFNSHEQALDFLVDAIKESGFNPGFKGENAVAIAIDAAASEFYNGQKYVFKKLKAASLSKNQADLDEKFEFSSEELLNYYGQLLAKYPIISIEDGFAESDWQGFIAFNQKYGNNHQIVGDDLTVTNVEILKKAINLKAINSILIKLNQIGTLSETLDAIHLAQKSGMTAVISHRSGESEDTTIADLAVAVSSGQIKTGSLSRTDRIAKYNRLLVIEEYLNSYAKADYIGREVFYNLKK.

Position 167 (Gln-167) interacts with (2R)-2-phosphoglycerate. Glu-209 (proton donor) is an active-site residue. Positions 250, 307, and 334 each coordinate Mg(2+). Residues Lys-359, Arg-388, Ser-389, and Lys-410 each contribute to the (2R)-2-phosphoglycerate site. Catalysis depends on Lys-359, which acts as the Proton acceptor.

It belongs to the enolase family. Mg(2+) serves as cofactor.

The protein resides in the cytoplasm. Its subcellular location is the secreted. It is found in the cell surface. It carries out the reaction (2R)-2-phosphoglycerate = phosphoenolpyruvate + H2O. The protein operates within carbohydrate degradation; glycolysis; pyruvate from D-glyceraldehyde 3-phosphate: step 4/5. Catalyzes the reversible conversion of 2-phosphoglycerate (2-PG) into phosphoenolpyruvate (PEP). It is essential for the degradation of carbohydrates via glycolysis. This chain is Enolase, found in Mesomycoplasma hyopneumoniae (strain 232) (Mycoplasma hyopneumoniae).